The chain runs to 2472 residues: MPGGVRDLPALWEFLKEQKDVHREFDEPRFSAKGFSHPNPDRPGTAVARSGFLLDEDPRLFDAAFFGITDNEVETMDASQRKLLEVTYEAFENAGETWEGVSGSRVGVFVGDISFDNYLSQTRDWDYSGKYSATGSFPNMLANRIHYVFNLKGPSLLVNSACTSAMYALHLAMNSIRNGDCESAIVAGSNWIMDPNCHIAMGKLGALSATSRSHTFDASADGYARGEGFAALYLKKTSLAIEDGSPIRALIMGSAINANGRTNGITNPSGPAQEIVIREAYKNAGDLDPSQTTLLECHGTGTRVGDPTEIKAAGNVFGPSRSSERNDHLVVGSVKTNLGHLEGACALPGILKVVAALEQGEIPPTLGFQTPNPRIDFEEAKARVSTQVEPWPKDKLKRASITSAGFGGTNGHCIIDDVHNLLPSYIKPGIVGQHVERLNGQNDINGKSGTNGANGANRVNGVNGVNGVNGVNGANGHSNASLLSNGSNNPLDQRKHHHPKTDALKLVRKADAGTRKLVVLPFSAHNQTSLVANIDSLGQVIHQHSLADVAYTLSARRSRFMHRSYCIVDKDQVPEMGLKQEKELEIVSSPQHVSVGFIFTGQGAQWHAMGAGLFQYSVFQNVILYLDSILAMLPEPAPWKIADFIAGNCGTDDIQTPAVSQAVCTAVQIGLVDLLASWSVRPAGVAGHSSGEIAAAYASGRITAAEAIVAAYYRGYMVSFNNKRGAMLAVGFGPEKAMEYIREADVEDRVTVAAINSFDSVTLSGDADCVEDLSARLSKESIFNRLLRTGGLAYHSHHMLPFGSAYEEHVNDGLSHIRSLGVDTTSSKYPFIPWASSVTPDKSTTEVTASYWRANLESPVRFTDAVSNLLSLPDLNIGALVEIGPHPALKGPLGQITKSLGKVIPHIASLKRNQDAQRSLLECTGTLFVHNVSVSLVAVNAIDGQGPKGEHYLEYGCTAIDLPRYKYTYGPIKYHESRLSKEYRLRPTLRHDLLGSKVPGTTKLRPQWRNMLRLKDLGWLNDHRVPPHVLHPGAAHIVMAMVAAEHKYNEFPDALPIIGLIMRNVSIKKTLVVPEDDHGIEIVLSMELEDGATAKSPGWASFSIASIVRDSDQWTEHCSGQIKVEVAKFEQAMPIDTTMDGRLVDAQTWYKRFADMGLQFGPSFQGYSDIRADPAKNIASAKLALNTTAGMFPGGESTYPIHPASLDLVIRLGLMACNGGQAETASVQLPIHFNQMKFNYGHLEGRDWATGVSRGELRGLRGAYAQLQMLDEEGKVMLDIDNMRFTSLNNEQESPSTGDRVGKAYVSPFARLVWRPDIRTLSKDQFNEALTSYQDNFGEFPQLCRIFDLAGHANPDLRVLELGVSSNAGATQAILKVLMGSNSIKRYREYVATDITEERLESVRESTTEFRDVKYSVLDINKDPSEQGFQSGLYDIIVCSNGLQTPQAMQHLKRLVTPTGRLIQVNGTGSEIVPESLQNVDFELVGEVTEPVNHSIITVHALRSIEQHQIDSNRLVHFLHGDQGPPELLNQLAQVLGELGLAIKISLIDDAQTVVSPNSHVVAFLDGNNLLFAANQHRIGLFQHLAANTNSMMWLTSCGLVKGRNPDGSFVSGLLRTLAAENPAGQFLSVDIDAEDFRVRDTEMDRLVRSLVEVVLPLQQNPEHNREIVVNHDLAWQDGNMWVSRLVPDTELQGYDETAADDQNIKAIPLSTLGPVRAAFKIPGLLTSLYFKPYTELWNALPQDWIEIKLEAVGLNWKDLGLCSGRFDQNNLSNEYVGVISDIGSSVHGFSIGDRVYGMGKGHFGNYTRVPAVLAQKLEASVASLDAATMPLVYMTAVYAFEHITRVKGGSKVLIQSGSGGLGLAAIQLALSKGADVYVTVGTADKAQFLTDVMGISSDHIFSSRKLTDVPRMIRATKNGGFDVILSTSQGDMLHESIEALAPLGHLIDVGRMDVTGAKTVALELFQKSASFTSFDLGLVIERDPELGGDLMSTVNQHFRAGRIGPIRPYHVSDISQLDQALLKLSKGTHIGKMVISYQNPSSLLNVHQSVTHARFLSEASYILVGGLSPLGRCIIRWMVSRGAQHLSVWSRRGADNLSPEAAALINEMASQGVHIQIVTCDVSNREQVLRSMQDANSERAVRGVFNYAVSYQDISFDKMTADMFYQGMAAKVFGTKNLHEATANLPLDFFTMTSSLGTVYAFPTQSTYLAANNFLDYFARYRRQSGLPATTVSLGFIKDLGALTQDEVTVNLFARTKGQTVTGNQVLRALEPAFVKDLNTKDQWLGRSEDPLSAANIFTGIDPAVLANMKRAEPKGSASSTVPRWYHDPRVSLMLRAMDDAWRFGNEGGSDKATFGFDDADASPAVQLRRHFEASMKRIRNGQDEKEVAETVKLVSDAIRTTVAGMLFIDPSVVKESHTVVDHGIDSLLAAEFRTWLNSSFGKNISMLQLMDARSNIGSIARVIVEEAIGA.

Residues 1–417 (MPGGVRDLPA…GTNGHCIIDD (417 aa)) enclose the Ketosynthase family 3 (KS3) domain. Residues Cys-162, His-298, and His-340 each act as for beta-ketoacyl synthase activity in the active site. The tract at residues 442-502 (NDINGKSGTN…QRKHHHPKTD (61 aa)) is disordered. The segment covering 450 to 489 (TNGANGANRVNGVNGVNGVNGVNGANGHSNASLLSNGSNN) has biased composition (low complexity). The Malonyl-CoA:ACP transacylase (MAT) domain maps to 597–932 (FIFTGQGAQW…CTGTLFVHNV (336 aa)). The interval 991–1129 (HDLLGSKVPG…GQIKVEVAKF (139 aa)) is N-terminal hotdog fold. The 304-residue stretch at 991–1294 (HDLLGSKVPG…FTSLNNEQES (304 aa)) folds into the PKS/mFAS DH domain. The active-site Proton acceptor; for dehydratase activity is the His-1023. Residues 1141 to 1294 (GRLVDAQTWY…FTSLNNEQES (154 aa)) are C-terminal hotdog fold. Catalysis depends on Asp-1207, which acts as the Proton donor; for dehydratase activity. A methyltransferase (CMeT) domain region spans residues 1289 to 1505 (NNEQESPSTG…IITVHALRSI (217 aa)). An Enoyl reductase (ER) domain is found at 1724–2036 (GLLTSLYFKP…KGTHIGKMVI (313 aa)). A Ketoreductase (KR) domain is found at 2060–2239 (ASYILVGGLS…ATTVSLGFIK (180 aa)). The Carrier domain maps to 2391-2469 (ETVKLVSDAI…SIARVIVEEA (79 aa)). Residue Ser-2428 is modified to O-(pantetheine 4'-phosphoryl)serine.

Requires pantetheine 4'-phosphate as cofactor.

It participates in secondary metabolite biosynthesis. Its function is as follows. Highly reducing polyketide synthase; part of the gene cluster that mediates the biosynthesis of the 6-methyl-2-pyrone derivative xylariolide D. XilA produces the 5-alkyl-6-methyl-2-pyrone backbone called prexylariolide D via sequential condensations of 4 malonyl-CoA units with one acetyl-CoA starter unit. During the biosynthesis, the linear polyketide chain is branched by the addition of an acetyl unit as the origin of the methyl group at the 2-pyrone ring. Prexylariolide D is then hydroxylated at the side chain by xilC to form the final product, xylariolide D. This is Highly reducing polyketide synthase xilA from Penicillium crustosum (Blue mold fungus).